The primary structure comprises 293 residues: GTPase Era (293 aa).

Positions 2 to 168 (KILFSTIIGR…INEIKKYSYE (167 aa)) constitute an Era-type G domain. The tract at residues 10-17 (GRPNVGKS) is G1. 10–17 (GRPNVGKS) is a binding site for GTP. The interval 36-40 (QATRD) is G2. The interval 57-60 (DTPG) is G3. GTP is bound by residues 57 to 61 (DTPGI) and 118 to 121 (TKID). The G4 stretch occupies residues 118–121 (TKID). The G5 stretch occupies residues 147–149 (ISS). Residues 199-279 (LEQELPHSIL…KLFLKIKVKK (81 aa)) form the KH type-2 domain.

This sequence belongs to the TRAFAC class TrmE-Era-EngA-EngB-Septin-like GTPase superfamily. Era GTPase family. In terms of assembly, monomer.

Its subcellular location is the cytoplasm. The protein localises to the cell membrane. An essential GTPase that binds both GDP and GTP, with rapid nucleotide exchange. Plays a role in 16S rRNA processing and 30S ribosomal subunit biogenesis and possibly also in cell cycle regulation and energy metabolism. The polypeptide is GTPase Era (Mycoplasmopsis pulmonis (strain UAB CTIP) (Mycoplasma pulmonis)).